A 1603-amino-acid chain; its full sequence is Pentafunctional AROM polypeptide (1603 aa).

The tract at residues 1–384 (MGVPTKISIL…YEPRASTVSN (384 aa)) is 3-dehydroquinate synthase. Residues 44-46 (DTN), 81-84 (ESSK), 114-116 (GGV), and Asp-119 contribute to the NAD(+) site. Arg-130 contributes to the 7-phospho-2-dehydro-3-deoxy-D-arabino-heptonate binding site. 139–140 (TT) contributes to the NAD(+) binding site. 7-phospho-2-dehydro-3-deoxy-D-arabino-heptonate is bound by residues Asp-146 and Lys-152. Lys-161 is an NAD(+) binding site. Asn-162 is a binding site for 7-phospho-2-dehydro-3-deoxy-D-arabino-heptonate. Residues 179 to 182 (FLNT) and Asn-190 each bind NAD(+). A Zn(2+)-binding site is contributed by Glu-194. 7-phospho-2-dehydro-3-deoxy-D-arabino-heptonate is bound by residues 194-197 (EVIK) and Lys-250. Residue Glu-260 is the Proton acceptor; for 3-dehydroquinate synthase activity of the active site. 7-phospho-2-dehydro-3-deoxy-D-arabino-heptonate is bound by residues 264 to 268 (RNLLN) and His-271. His-271 serves as a coordination point for Zn(2+). Residue His-275 is the Proton acceptor; for 3-dehydroquinate synthase activity of the active site. 7-phospho-2-dehydro-3-deoxy-D-arabino-heptonate-binding residues include His-287 and Lys-356. His-287 contacts Zn(2+). Residues 397 to 842 (VYPGFPKSLN…WNTLAQTFKV (446 aa)) form an EPSP synthase region. Cys-824 (for EPSP synthase activity) is an active-site residue. The tract at residues 872–1064 (AASIFIIGMR…RRKENTFFVS (193 aa)) is shikimate kinase. Residue 879 to 886 (GMRGAGKT) coordinates ATP. Positions 1065–1285 (LTFPDLTPAS…AAPGQLSARE (221 aa)) are 3-dehydroquinase. The Proton acceptor; for 3-dehydroquinate dehydratase activity role is filled by His-1188. The active-site Schiff-base intermediate with substrate; for 3-dehydroquinate dehydratase activity is the Lys-1216. A shikimate dehydrogenase region spans residues 1298–1603 (AKKFAVIGKP…GVSSSDDTIS (306 aa)).

In the N-terminal section; belongs to the sugar phosphate cyclases superfamily. Dehydroquinate synthase family. The protein in the 2nd section; belongs to the EPSP synthase family. This sequence in the 3rd section; belongs to the shikimate kinase family. It in the 4th section; belongs to the type-I 3-dehydroquinase family. In the C-terminal section; belongs to the shikimate dehydrogenase family. In terms of assembly, homodimer. It depends on Zn(2+) as a cofactor.

Its subcellular location is the cytoplasm. It carries out the reaction 7-phospho-2-dehydro-3-deoxy-D-arabino-heptonate = 3-dehydroquinate + phosphate. The catalysed reaction is 3-dehydroquinate = 3-dehydroshikimate + H2O. The enzyme catalyses shikimate + NADP(+) = 3-dehydroshikimate + NADPH + H(+). It catalyses the reaction shikimate + ATP = 3-phosphoshikimate + ADP + H(+). It carries out the reaction 3-phosphoshikimate + phosphoenolpyruvate = 5-O-(1-carboxyvinyl)-3-phosphoshikimate + phosphate. It participates in metabolic intermediate biosynthesis; chorismate biosynthesis; chorismate from D-erythrose 4-phosphate and phosphoenolpyruvate: step 2/7. The protein operates within metabolic intermediate biosynthesis; chorismate biosynthesis; chorismate from D-erythrose 4-phosphate and phosphoenolpyruvate: step 3/7. It functions in the pathway metabolic intermediate biosynthesis; chorismate biosynthesis; chorismate from D-erythrose 4-phosphate and phosphoenolpyruvate: step 4/7. Its pathway is metabolic intermediate biosynthesis; chorismate biosynthesis; chorismate from D-erythrose 4-phosphate and phosphoenolpyruvate: step 5/7. It participates in metabolic intermediate biosynthesis; chorismate biosynthesis; chorismate from D-erythrose 4-phosphate and phosphoenolpyruvate: step 6/7. The AROM polypeptide catalyzes 5 consecutive enzymatic reactions in prechorismate polyaromatic amino acid biosynthesis. The protein is Pentafunctional AROM polypeptide of Paracoccidioides brasiliensis (strain Pb03).